Reading from the N-terminus, the 604-residue chain is Beta-alanine transporter (604 aa).

The Cytoplasmic portion of the chain corresponds to 1–23; it reads MDFDEVLREVGSFGLYQKVIICS. Residues 24 to 44 traverse the membrane as a helical segment; the sequence is VLLPAALPCAFHAYSQLFIAA. Residues 45 to 151 lie on the Extracellular side of the membrane; the sequence is TPQHFCRVPE…QEWNLVCDRS (107 aa). Asn68 and Asn88 each carry an N-linked (GlcNAc...) asparagine glycan. Residues 152 to 172 traverse the membrane as a helical segment; it reads FLVTLALVVFGVGGLLGNYVF. Residues 173 to 182 lie on the Cytoplasmic side of the membrane; the sequence is GYLVDLWGRR. Residues 183-203 traverse the membrane as a helical segment; that stretch reads PSFYAYLLLEIIACAASAFAW. At 204–212 the chain is on the extracellular side; it reads NYYTWLGLR. A helical transmembrane segment spans residues 213-233; that stretch reads FVVGLTVPAILASPYVLAIEL. Residues 234 to 243 lie on the Cytoplasmic side of the membrane; that stretch reads VGPERRVFCT. A helical transmembrane segment spans residues 244-264; sequence IVSNIAYSLGLVVLAGVIYIV. Residues 265 to 268 are Extracellular-facing; sequence RDWR. Residues 269–289 form a helical membrane-spanning segment; it reads ELSLAVSMPLLMLFSCFFVLP. The Cytoplasmic segment spans residues 290-362; the sequence is ESPRWLMAVG…FRGPNMRRKT (73 aa). Residues 363–383 form a helical membrane-spanning segment; that stretch reads LIITLIWFANTSVYVGLSYYA. The Extracellular portion of the chain corresponds to 384–390; it reads PALGGDE. A helical transmembrane segment spans residues 391–411; it reads IWNFFLAGAVELPTYLLLWPG. At 412-418 the chain is on the cytoplasmic side; that stretch reads LSYFGRR. A helical transmembrane segment spans residues 419–439; that stretch reads WILFISMLVGGVACVATFLYP. The Extracellular segment spans residues 440 to 442; it reads DIT. A helical membrane pass occupies residues 443-463; it reads LLLYCVGKMGISSSFVVLPLM. The Cytoplasmic portion of the chain corresponds to 464 to 473; it reads ASELYPTVVR. A helical transmembrane segment spans residues 474-494; it reads GLGMSFSSVISMVGPIVIPMI. Over 495 to 501 the chain is Extracellular; it reads NHMGQQM. A helical membrane pass occupies residues 502 to 522; the sequence is LVLPLIVMGALLILGGFASLL. At 523–604 the chain is on the cytoplasmic side; the sequence is LPETRNRNLP…SICKNEMRTL (82 aa).

It belongs to the major facilitator (TC 2.A.1) superfamily. Organic cation transporter (TC 2.A.1.19) family. As to expression, expressed in the head and predominantly in the retinal pigment cells of the compound eye.

It is found in the cell membrane. Functionally, beta-alanine transporter required for the uptake of beta-alanine by the glia. Required for the recycling process of the neurotransmitter histamine in photoreceptor neurons of the compound eye and therefore for photoreceptor synaptic transmission. Following histamine release from photoreceptors and its uptake by glia, histamine is conjugated to beta-alanine by e/Ebony to form the inactive metabolite, carcinine. This chain is Beta-alanine transporter, found in Drosophila melanogaster (Fruit fly).